A 577-amino-acid chain; its full sequence is Arginine--tRNA ligase (577 aa).

Residues 122 to 132 carry the 'HIGH' region motif; it reads PNVAKEMHVGH.

This sequence belongs to the class-I aminoacyl-tRNA synthetase family. In terms of assembly, monomer.

The protein localises to the cytoplasm. The catalysed reaction is tRNA(Arg) + L-arginine + ATP = L-arginyl-tRNA(Arg) + AMP + diphosphate. This is Arginine--tRNA ligase (argS) from Salmonella typhimurium (strain SL1344).